The following is a 623-amino-acid chain: DEAD-box ATP-dependent RNA helicase 52C (623 aa).

Positions 1 to 120 (MATPSRTSWA…DGDAAAGAGD (120 aa)) are disordered. Over residues 10 to 29 (ADVADADPAPAPAPAANGPA) the composition is skewed to low complexity. Positions 54-69 (APPPSSSSSSAPPPRA) are enriched in pro residues. A compositionally biased stretch (low complexity) spans 70–83 (APGLLAPRPAAAGM). Residues 84-97 (GRMGGGGGGGGFGG) are compositionally biased toward gly residues. Positions 155–183 (GTFAEIDLGQALNDNIRRCKYVRPTPVQR) match the Q motif motif. A Helicase ATP-binding domain is found at 186-372 (IPISLAGRDL…SDFLENYIFL (187 aa)). 199 to 206 (AQTGSGKT) lines the ATP pocket. The short motif at 316–319 (DEAD) is the DEAD box element. The Helicase C-terminal domain occupies 399–550 (HLMDLLHAQR…EVPAWLSRYA (152 aa)). The disordered stretch occupies residues 553–595 (PSYGGGGGRNRRSGGGSRFGGRDFRRDSSSGRGGGDYYGGGSS). The span at 555-571 (YGGGGGRNRRSGGGSRF) shows a compositional bias: gly residues. The span at 572 to 581 (GGRDFRRDSS) shows a compositional bias: basic and acidic residues. Over residues 583-595 (GRGGGDYYGGGSS) the composition is skewed to gly residues.

This sequence belongs to the DEAD box helicase family. DDX3/DED1 subfamily.

It carries out the reaction ATP + H2O = ADP + phosphate + H(+). In Oryza sativa subsp. japonica (Rice), this protein is DEAD-box ATP-dependent RNA helicase 52C.